Consider the following 179-residue polypeptide: Sperm surface protein Sp17 (179 aa).

A compositionally biased stretch (basic and acidic residues) spans 72-109 (HAFKDEPPEKSETQKIQPEKVAIEKETMPQETVKEKET). Disordered regions lie at residues 72 to 138 (HAFK…EGLL) and 159 to 179 (TRKE…ENNE). The segment covering 116 to 135 (EPTEEPQKEEEEEEDEEDLE) has biased composition (acidic residues). The region spanning 143–172 (MQDAAVKIQAVFRGHKTRKEYLKKRDSTDE) is the IQ domain. Residues 161-170 (KEYLKKRDST) are compositionally biased toward basic and acidic residues.

Homodimer. May interact with ROPN1. In terms of tissue distribution, testis- and sperm-specific.

The protein resides in the membrane. Sperm surface zona pellucida binding protein. Helps to bind spermatozoa to the zona pellucida with high affinity. Might function in binding zona pellucida and carbohydrates. This chain is Sperm surface protein Sp17 (SPA17), found in Monodelphis domestica (Gray short-tailed opossum).